Consider the following 149-residue polypeptide: Large ribosomal subunit protein bL9 (149 aa).

This sequence belongs to the bacterial ribosomal protein bL9 family.

In terms of biological role, binds to the 23S rRNA. The protein is Large ribosomal subunit protein bL9 of Synechococcus sp. (strain JA-2-3B'a(2-13)) (Cyanobacteria bacterium Yellowstone B-Prime).